The sequence spans 215 residues: Guanylate kinase (215 aa).

Positions 6–185 (GAILVLSGPS…SEKLLLSIAR (180 aa)) constitute a Guanylate kinase-like domain. Position 13–20 (13–20 (GPSGSGKS)) interacts with ATP.

The protein belongs to the guanylate kinase family.

It is found in the cytoplasm. The catalysed reaction is GMP + ATP = GDP + ADP. In terms of biological role, essential for recycling GMP and indirectly, cGMP. The sequence is that of Guanylate kinase from Wolinella succinogenes (strain ATCC 29543 / DSM 1740 / CCUG 13145 / JCM 31913 / LMG 7466 / NCTC 11488 / FDC 602W) (Vibrio succinogenes).